The sequence spans 355 residues: S-adenosylmethionine:tRNA ribosyltransferase-isomerase (355 aa).

The protein belongs to the QueA family. Monomer.

The protein resides in the cytoplasm. It carries out the reaction 7-aminomethyl-7-carbaguanosine(34) in tRNA + S-adenosyl-L-methionine = epoxyqueuosine(34) in tRNA + adenine + L-methionine + 2 H(+). The protein operates within tRNA modification; tRNA-queuosine biosynthesis. Transfers and isomerizes the ribose moiety from AdoMet to the 7-aminomethyl group of 7-deazaguanine (preQ1-tRNA) to give epoxyqueuosine (oQ-tRNA). In Photorhabdus laumondii subsp. laumondii (strain DSM 15139 / CIP 105565 / TT01) (Photorhabdus luminescens subsp. laumondii), this protein is S-adenosylmethionine:tRNA ribosyltransferase-isomerase.